The following is a 313-amino-acid chain: MKRAPAFLSAEEVQDHLRSSSLLIPPLEAALANFSKGPDGGVMQPVRTVVPVAKHRGFLGVMPAYSAAEDALTTKLVTFYEGHSNTAVPSHQASVLLFDPSNGSLLAVMDGNVITAKRTAAVSAIATKLLKPPGSDVLCILGAGVQAYSHYEIFTEQFSFKEVRMWNRTRENAEKFASTVQGDVRVCSSVQEAVTGADVIITVTMATEPILFGEWVKPGAHINAVGASRPDWRELDDELMRQAVLYVDSREAALKESGDVLLSGADIFAELGEVISGAKPAHCEKTTVFKSLGMAVEDLVAAKLVYDSWSSGK.

Arg-47 serves as a coordination point for 3,3',5-triiodo-L-thyronine. Positions 90, 91, 118, 143, 145, 146, 167, 168, 169, 172, 204, 205, and 225 each coordinate NADPH. 3,3',5-triiodo-L-thyronine is bound at residue Glu-256. Residue Ser-291 participates in NADPH binding.

The protein belongs to the ornithine cyclodeaminase/mu-crystallin family. Homodimer. Binds the thyroid hormone triiodothyronine (T3); T3 binding inhibits enzymatic activity. In terms of tissue distribution, expressed in the spiral ligament of the cochlea (at protein level).

Its subcellular location is the cytoplasm. It carries out the reaction L-pipecolate + NADP(+) = Delta(1)-piperideine-2-carboxylate + NADPH + H(+). It catalyses the reaction L-pipecolate + NAD(+) = Delta(1)-piperideine-2-carboxylate + NADH + H(+). The catalysed reaction is L-proline + NADP(+) = 1-pyrroline-2-carboxylate + NADPH + H(+). The enzyme catalyses L-proline + NAD(+) = 1-pyrroline-2-carboxylate + NADH + H(+). It carries out the reaction (3R)-1,4-thiomorpholine-3-carboxylate + NAD(+) = 3,4-dehydrothiomorpholine-3-carboxylate + NADH + 2 H(+). It catalyses the reaction (3R)-1,4-thiomorpholine-3-carboxylate + NADP(+) = 3,4-dehydrothiomorpholine-3-carboxylate + NADPH + 2 H(+). The catalysed reaction is (S)-cystathionine ketimine + NADH + 2 H(+) = (3R,5S)-2,3,5,6,7-pentahydro-1,4-thiazepine-3,5-dicarboxylate + NAD(+). The enzyme catalyses (S)-cystathionine ketimine + NADPH + 2 H(+) = (3R,5S)-2,3,5,6,7-pentahydro-1,4-thiazepine-3,5-dicarboxylate + NADP(+). It carries out the reaction (R)-lanthionine ketimine + NADPH + 2 H(+) = (3R,5R)-1,4-thiomorpholine-3,5-dicarboxylate + NADP(+). It catalyses the reaction Delta(2)-thiazoline-2-carboxylate + NADPH + 2 H(+) = L-thiazolidine-2-carboxylate + NADP(+). Functionally, catalyzes the NAD(P)H-dependent reduction of imine double bonds of a number of cyclic ketimine substrates, including sulfur-containing cyclic ketimines. Under physiological conditions, it efficiently catalyzes delta(1)-piperideine-2-carboxylate (P2C) and delta(1)-pyrroline-2-carboxylate (Pyr2C) reduction, suggesting a central role in lysine and glutamate metabolism. Additional substrates are delta(2)-thiazoline-2-carboxylate (T2C), 3,4-dehydrothiomorpholine-3-carboxylate (AECK), and (R)-lanthionine ketimine (LK) that is reduced at very low rate compared to other substrates. Also catalyzes the NAD(P)H-dependent reduction of (S)-cystathionine ketimine (CysK). This is Ketimine reductase mu-crystallin from Mus musculus (Mouse).